The chain runs to 308 residues: Oligopeptide transport ATP-binding protein AmiF (308 aa).

Residues 6-251 (VEIKDLEISF…PIHPYTQALL (246 aa)) enclose the ABC transporter domain. 42–49 (GESGSGKT) lines the ATP pocket.

Belongs to the ABC transporter superfamily.

It is found in the cell membrane. Its function is as follows. Part of the binding-protein-dependent transport system for oligopeptides. Probably responsible for energy coupling to the transport system. The chain is Oligopeptide transport ATP-binding protein AmiF (amiF) from Streptococcus pneumoniae serotype 4 (strain ATCC BAA-334 / TIGR4).